The chain runs to 503 residues: Cobyric acid synthase (503 aa).

A GATase cobBQ-type domain is found at 255-444; sequence DIDIAVIRYP…FHDLFHNDAF (190 aa). The active-site Nucleophile is the C337. The active site involves H436.

It belongs to the CobB/CobQ family. CobQ subfamily.

Its pathway is cofactor biosynthesis; adenosylcobalamin biosynthesis. In terms of biological role, catalyzes amidations at positions B, D, E, and G on adenosylcobyrinic A,C-diamide. NH(2) groups are provided by glutamine, and one molecule of ATP is hydrogenolyzed for each amidation. In Geobacillus sp. (strain WCH70), this protein is Cobyric acid synthase.